A 207-amino-acid polypeptide reads, in one-letter code: Ribonuclease HII (207 aa).

An RNase H type-2 domain is found at 18 to 206; it reads EFIVGVDEVG…VKNILQLLEK (189 aa). A divalent metal cation is bound by residues Asp-24, Glu-25, and Asp-115.

Belongs to the RNase HII family. Requires Mn(2+) as cofactor. Mg(2+) serves as cofactor.

The protein resides in the cytoplasm. It catalyses the reaction Endonucleolytic cleavage to 5'-phosphomonoester.. In terms of biological role, endonuclease that specifically degrades the RNA of RNA-DNA hybrids. This chain is Ribonuclease HII, found in Hydrogenovibrio crunogenus (strain DSM 25203 / XCL-2) (Thiomicrospira crunogena).